The primary structure comprises 452 residues: Tylactone mycaminosyltransferase (452 aa).

Over residues 1 to 16 (MRRALDDRRRGPHGPE) the composition is skewed to basic and acidic residues. Positions 1 to 20 (MRRALDDRRRGPHGPEGKPP) are disordered.

The protein belongs to the glycosyltransferase 28 family.

The catalysed reaction is tylactone + dTDP-alpha-D-mycaminose = 5-O-beta-D-mycaminosyltylactone + dTDP + H(+). It participates in antibiotic biosynthesis; tylosin biosynthesis. Its activity is regulated as follows. The activity of TylM2 is substantially increased by the addition of the accessory protein TylM3. Involved in the biosynthesis of the macrolide antibiotic tylosin derived from the polyketide lactone tylactone. Catalyzes the transfer of alpha-D-mycaminosyl from dTDP-alpha-D-mycaminose to the 5-hydroxyl group of tylactone to yield 5-O-mycaminosytylactone. It can also accept 16-membered tylactone and 12-membered ring macrolide. The polypeptide is Tylactone mycaminosyltransferase (Streptomyces fradiae (Streptomyces roseoflavus)).